We begin with the raw amino-acid sequence, 417 residues long: NADH-quinone oxidoreductase subunit D (417 aa).

Belongs to the complex I 49 kDa subunit family. NDH-1 is composed of 14 different subunits. Subunits NuoB, C, D, E, F, and G constitute the peripheral sector of the complex.

Its subcellular location is the cell inner membrane. It catalyses the reaction a quinone + NADH + 5 H(+)(in) = a quinol + NAD(+) + 4 H(+)(out). In terms of biological role, NDH-1 shuttles electrons from NADH, via FMN and iron-sulfur (Fe-S) centers, to quinones in the respiratory chain. The immediate electron acceptor for the enzyme in this species is believed to be ubiquinone. Couples the redox reaction to proton translocation (for every two electrons transferred, four hydrogen ions are translocated across the cytoplasmic membrane), and thus conserves the redox energy in a proton gradient. This is NADH-quinone oxidoreductase subunit D from Coxiella burnetii (strain CbuG_Q212) (Coxiella burnetii (strain Q212)).